The following is a 98-amino-acid chain: NADH-ubiquinone oxidoreductase chain 4L (98 aa).

Helical transmembrane passes span Met1–Phe21, Leu26–Leu46, and Ala59–Val79.

Belongs to the complex I subunit 4L family.

It is found in the mitochondrion membrane. The catalysed reaction is a ubiquinone + NADH + 5 H(+)(in) = a ubiquinol + NAD(+) + 4 H(+)(out). Its function is as follows. Core subunit of the mitochondrial membrane respiratory chain NADH dehydrogenase (Complex I) which catalyzes electron transfer from NADH through the respiratory chain, using ubiquinone as an electron acceptor. Part of the enzyme membrane arm which is embedded in the lipid bilayer and involved in proton translocation. The sequence is that of NADH-ubiquinone oxidoreductase chain 4L (MT-ND4L) from Gadus morhua (Atlantic cod).